Consider the following 52-residue polypeptide: Phospholamban (52 aa).

An N-acetylmethionine modification is found at Met1. Residues 1 to 31 lie on the Cytoplasmic side of the membrane; the sequence is MEKVQYITRSALRRASTLEVNPQARQRLQEL. Ser16 bears the Phosphoserine; by PKA mark. Thr17 is subject to Phosphothreonine; by CaMK. Residues 32 to 52 traverse the membrane as a helical segment; it reads FVNFCLILICLLLICIIVMLL.

The protein belongs to the phospholamban family. Homopentamer. Phosphorylated in response to beta-adrenergic stimulation. Phosphorylation by PKA abolishes the inhibition of ATP2A2-mediated calcium uptake. Heart.

It is found in the endoplasmic reticulum membrane. Its subcellular location is the sarcoplasmic reticulum membrane. The protein resides in the mitochondrion membrane. The protein localises to the membrane. Functionally, reversibly inhibits the activity of ATP2A2/SERCA2 in cardiac sarcoplasmic reticulum by decreasing the apparent affinity of the ATPase for Ca(2+). Binds preferentially to the ATP-bound E1 conformational form of ATP2A2 which predominates at low Ca(2+) concentrations during the diastolic phase of the cardiac cycle. Inhibits ATP2A2 Ca(2+) affinity by disrupting its allosteric activation by ATP. Modulates the contractility of the heart muscle in response to physiological stimuli via its effects on ATP2A2. Modulates calcium re-uptake during muscle relaxation and plays an important role in calcium homeostasis in the heart muscle. The degree of ATP2A2 inhibition depends on the oligomeric state of PLN. ATP2A2 inhibition is alleviated by PLN phosphorylation. The protein is Phospholamban (PLN) of Gallus gallus (Chicken).